The following is a 64-amino-acid chain: Translational regulator CsrA (64 aa).

This sequence belongs to the CsrA/RsmA family. Homodimer; the beta-strands of each monomer intercalate to form a hydrophobic core, while the alpha-helices form wings that extend away from the core.

It localises to the cytoplasm. In terms of biological role, a key translational regulator that binds mRNA to regulate translation initiation and/or mRNA stability. Mediates global changes in gene expression, shifting from rapid growth to stress survival by linking envelope stress, the stringent response and the catabolite repression systems. Usually binds in the 5'-UTR; binding at or near the Shine-Dalgarno sequence prevents ribosome-binding, repressing translation, binding elsewhere in the 5'-UTR can activate translation and/or stabilize the mRNA. Its function is antagonized by small RNA(s). The protein is Translational regulator CsrA of Dichelobacter nodosus (strain VCS1703A).